The following is a 174-amino-acid chain: Suppressor of RNA silencing (174 aa).

Residues 86 to 116 (HAQLRSLNAELDTLEAREESLRAQIKALSAG) adopt a coiled-coil conformation.

It belongs to the virgaviridae suppressor of RNA silencing family.

Suppressor of RNA-mediated gene silencing, also known as post-transcriptional gene silencing (PTGS), a mechanism of plant viral defense that performs sequence-specific inhibition of viral mRNAs expression. The sequence is that of Suppressor of RNA silencing from Soil-borne wheat mosaic virus (strain United States/Nebraska/1981) (SBWMV).